The sequence spans 407 residues: Imidazolonepropionase (407 aa).

Residues His-68 and His-70 each coordinate Fe(3+). Zn(2+) is bound by residues His-68 and His-70. Arg-77, Tyr-140, and His-173 together coordinate 4-imidazolone-5-propanoate. Tyr-140 is an N-formimidoyl-L-glutamate binding site. His-238 is a Fe(3+) binding site. Residue His-238 participates in Zn(2+) binding. Gln-241 contributes to the 4-imidazolone-5-propanoate binding site. Asp-313 contributes to the Fe(3+) binding site. A Zn(2+)-binding site is contributed by Asp-313. The N-formimidoyl-L-glutamate site is built by Asn-315 and Gly-317. Thr-318 serves as a coordination point for 4-imidazolone-5-propanoate.

The protein belongs to the metallo-dependent hydrolases superfamily. HutI family. The cofactor is Zn(2+). Fe(3+) serves as cofactor.

The protein localises to the cytoplasm. It carries out the reaction 4-imidazolone-5-propanoate + H2O = N-formimidoyl-L-glutamate. Its pathway is amino-acid degradation; L-histidine degradation into L-glutamate; N-formimidoyl-L-glutamate from L-histidine: step 3/3. Its function is as follows. Catalyzes the hydrolytic cleavage of the carbon-nitrogen bond in imidazolone-5-propanoate to yield N-formimidoyl-L-glutamate. It is the third step in the universal histidine degradation pathway. The chain is Imidazolonepropionase from Burkholderia lata (strain ATCC 17760 / DSM 23089 / LMG 22485 / NCIMB 9086 / R18194 / 383).